A 66-amino-acid chain; its full sequence is Antitoxin RelB2 (66 aa).

Antitoxin component of a type II toxin-antitoxin (TA) system. Neutralizes the effect of cognate toxin RelE2, but no other RelE or ParE toxin. In Caulobacter vibrioides (strain ATCC 19089 / CIP 103742 / CB 15) (Caulobacter crescentus), this protein is Antitoxin RelB2 (relB2).